The following is a 375-amino-acid chain: Fructose-1,6-bisphosphate aldolase/phosphatase (375 aa).

Asp-15 functions as the Proton acceptor; for FBP phosphatase activity in the catalytic mechanism. Residues Asp-15, His-22, Asp-56, and Asp-57 each contribute to the Mg(2+) site. Beta-D-fructose 1,6-bisphosphate is bound at residue His-22. His-22 contributes to the dihydroxyacetone phosphate binding site. Tyr-94 provides a ligand contact to beta-D-fructose 1,6-bisphosphate. Residue Gln-98 coordinates Mg(2+). 107–108 provides a ligand contact to beta-D-fructose 1,6-bisphosphate; sequence GN. Asp-135 serves as a coordination point for Mg(2+). Lys-136 is a beta-D-fructose 1,6-bisphosphate binding site. A dihydroxyacetone phosphate-binding site is contributed by Lys-136. The Proton donor/acceptor; for FBP aldolase activity role is filled by Tyr-237. Mg(2+)-binding residues include Lys-240, Asp-241, and Asp-242. Lys-240 acts as the Schiff-base intermediate with DHAP; for FBP aldolase activity in catalysis. Residues 250-251, Arg-274, Asp-295, and Tyr-357 contribute to the beta-D-fructose 1,6-bisphosphate site; that span reads QS. Residues Arg-274 and Asp-295 each contribute to the dihydroxyacetone phosphate site.

The protein belongs to the FBP aldolase/phosphatase family. As to quaternary structure, homooctamer; dimer of tetramers. The cofactor is Mg(2+).

The enzyme catalyses beta-D-fructose 1,6-bisphosphate + H2O = beta-D-fructose 6-phosphate + phosphate. It catalyses the reaction beta-D-fructose 1,6-bisphosphate = D-glyceraldehyde 3-phosphate + dihydroxyacetone phosphate. The protein operates within carbohydrate biosynthesis; gluconeogenesis. With respect to regulation, activity is enhanced by dithioerythritol, and is slightly inhibited by fructose 2,6-bisphosphate. AMP does not inhibit the enzyme activity. Catalyzes two subsequent steps in gluconeogenesis: the aldol condensation of dihydroxyacetone phosphate (DHAP) and glyceraldehyde-3-phosphate (GA3P) to fructose-1,6-bisphosphate (FBP), and the dephosphorylation of FBP to fructose-6-phosphate (F6P). Does not display hydrolase activity against fructose 2,6-bisphosphate, fructose 6-phosphate, fructose 1-phosphate, glucose 6-phosphate, and glucose 1-phosphate. Exhibits only negligible activity on inositol-1-phosphate (IMP). Is essential for the growth of T.kodakaraensis under gluconeogenic conditions. The polypeptide is Fructose-1,6-bisphosphate aldolase/phosphatase (Thermococcus kodakarensis (strain ATCC BAA-918 / JCM 12380 / KOD1) (Pyrococcus kodakaraensis (strain KOD1))).